Consider the following 322-residue polypeptide: tRNA uridine(34) hydroxylase (322 aa).

The 95-residue stretch at 125–219 folds into the Rhodanese domain; it reads QDPDTIVIDA…YGKDPEVKGQ (95 aa). Cysteine 179 acts as the Cysteine persulfide intermediate in catalysis.

It belongs to the TrhO family.

The enzyme catalyses uridine(34) in tRNA + AH2 + O2 = 5-hydroxyuridine(34) in tRNA + A + H2O. Functionally, catalyzes oxygen-dependent 5-hydroxyuridine (ho5U) modification at position 34 in tRNAs. This is tRNA uridine(34) hydroxylase from Bacillus velezensis (strain DSM 23117 / BGSC 10A6 / LMG 26770 / FZB42) (Bacillus amyloliquefaciens subsp. plantarum).